Consider the following 179-residue polypeptide: Bifunctional protein PyrR (179 aa).

The PRPP-binding motif lies at 100–112 (VILVDDVLFTGRT).

It belongs to the purine/pyrimidine phosphoribosyltransferase family. PyrR subfamily.

It catalyses the reaction UMP + diphosphate = 5-phospho-alpha-D-ribose 1-diphosphate + uracil. Its function is as follows. Regulates the transcription of the pyrimidine nucleotide (pyr) operon in response to exogenous pyrimidines. Functionally, also displays a weak uracil phosphoribosyltransferase activity which is not physiologically significant. The sequence is that of Bifunctional protein PyrR from Haemophilus influenzae (strain 86-028NP).